The primary structure comprises 411 residues: Serine hydroxymethyltransferase (411 aa).

(6S)-5,6,7,8-tetrahydrofolate contacts are provided by residues leucine 113 and 117 to 119 (GHL). Lysine 222 is modified (N6-(pyridoxal phosphate)lysine). 346–348 (SPF) is a binding site for (6S)-5,6,7,8-tetrahydrofolate.

The protein belongs to the SHMT family. Homodimer. It depends on pyridoxal 5'-phosphate as a cofactor.

Its subcellular location is the cytoplasm. The enzyme catalyses (6R)-5,10-methylene-5,6,7,8-tetrahydrofolate + glycine + H2O = (6S)-5,6,7,8-tetrahydrofolate + L-serine. Its pathway is one-carbon metabolism; tetrahydrofolate interconversion. It functions in the pathway amino-acid biosynthesis; glycine biosynthesis; glycine from L-serine: step 1/1. Catalyzes the reversible interconversion of serine and glycine with tetrahydrofolate (THF) serving as the one-carbon carrier. This reaction serves as the major source of one-carbon groups required for the biosynthesis of purines, thymidylate, methionine, and other important biomolecules. Also exhibits THF-independent aldolase activity toward beta-hydroxyamino acids, producing glycine and aldehydes, via a retro-aldol mechanism. The polypeptide is Serine hydroxymethyltransferase (Prochlorococcus marinus (strain NATL2A)).